A 384-amino-acid polypeptide reads, in one-letter code: MSWQEKINAALDARRAADALRRRYPVAQGAGRWLVADDRQYLNFSSNDYLGLSHHPQIIRAWQQGAEQFGIGSGGSGHVSGYSVVHQALEEELAEWLGYSRALLFISGFAANQAVIAAMMAKEDRIAADRLSHASLLEAASLSPSQLRRFAHNDVTHLARLLASPCPGQQMVVTEGVFSMDGDSAPLAEIQQVTQQHNGWLMVDDAHGTGVIGEQGRGSCWLQKVKPELLVVTFGKGFGVSGAAVLCSSTVADYLLQFARHLIYSTSMPPAQAQALRASLAVIRSDEGDARREKLAALITRFRAGVQDLPFTLADSCSAIQPLIVGDNSRALQLAEKLRQQGCWVTAIRPPTVPAGTARLRLTLTAAHEMQDIDRLLEVLHGNG.

Arg21 provides a ligand contact to substrate. 108-109 (GF) contributes to the pyridoxal 5'-phosphate binding site. His133 lines the substrate pocket. Positions 179, 207, and 233 each coordinate pyridoxal 5'-phosphate. The residue at position 236 (Lys236) is an N6-(pyridoxal phosphate)lysine. Thr352 lines the substrate pocket.

It belongs to the class-II pyridoxal-phosphate-dependent aminotransferase family. BioF subfamily. In terms of assembly, homodimer. Pyridoxal 5'-phosphate serves as cofactor.

It carries out the reaction 6-carboxyhexanoyl-[ACP] + L-alanine + H(+) = (8S)-8-amino-7-oxononanoate + holo-[ACP] + CO2. It functions in the pathway cofactor biosynthesis; biotin biosynthesis. In terms of biological role, catalyzes the decarboxylative condensation of pimeloyl-[acyl-carrier protein] and L-alanine to produce 8-amino-7-oxononanoate (AON), [acyl-carrier protein], and carbon dioxide. This chain is 8-amino-7-oxononanoate synthase, found in Escherichia coli (strain K12 / DH10B).